The primary structure comprises 431 residues: Enolase (431 aa).

Q167 contacts (2R)-2-phosphoglycerate. E209 acts as the Proton donor in catalysis. 3 residues coordinate Mg(2+): D246, E290, and D317. 4 residues coordinate (2R)-2-phosphoglycerate: K342, R371, S372, and K393. K342 serves as the catalytic Proton acceptor.

This sequence belongs to the enolase family. Component of the RNA degradosome, a multiprotein complex involved in RNA processing and mRNA degradation. The cofactor is Mg(2+).

It localises to the cytoplasm. It is found in the secreted. Its subcellular location is the cell surface. It catalyses the reaction (2R)-2-phosphoglycerate = phosphoenolpyruvate + H2O. Its pathway is carbohydrate degradation; glycolysis; pyruvate from D-glyceraldehyde 3-phosphate: step 4/5. Functionally, catalyzes the reversible conversion of 2-phosphoglycerate (2-PG) into phosphoenolpyruvate (PEP). It is essential for the degradation of carbohydrates via glycolysis. The protein is Enolase of Erwinia tasmaniensis (strain DSM 17950 / CFBP 7177 / CIP 109463 / NCPPB 4357 / Et1/99).